Reading from the N-terminus, the 435-residue chain is Monodictyphenone cluster transcription factor (435 aa).

The zn(2)-C6 fungal-type DNA-binding region spans 23-50 (CHACALSKLKCSQDKPTCSRCVKRGTAC). The disordered stretch occupies residues 117 to 147 (QYHQRTPSYPESIPSLLSSTGPGTSATSPLT). A compositionally biased stretch (low complexity) spans 130-147 (PSLLSSTGPGTSATSPLT).

The protein localises to the nucleus. Transcription factor that regulates the expression of the gene cluster that mediates the biosynthesis of monodictyphenone, a prenyl xanthone derivative. The sequence is that of Monodictyphenone cluster transcription factor from Emericella nidulans (strain FGSC A4 / ATCC 38163 / CBS 112.46 / NRRL 194 / M139) (Aspergillus nidulans).